We begin with the raw amino-acid sequence, 369 residues long: N-methyltransferase imqF (369 aa).

This sequence belongs to the methyltransferase superfamily.

It participates in secondary metabolite biosynthesis. Functionally, N-methyltransferase; part of the gene cluster that mediates the biosynthesis of imizoquins A to D, tripeptide-derived alkaloids that serve a protective role against oxidative stress that are essential for normal germination. ImqB is a canonical three-module NRPS that assembles the tripeptide backbone of the imizoquins via condensation of Trp, Tyr, and Leu-derived precursors. N-methylation by imqF and phenol oxidation by imqC, followed by cyclization via the FAD-dependent oxidase imqH carry out the three-step transformation of L-tyrosine into tetrahydroisoquinoline. Importantly, this sequence requires the presence of a free amine in the tyrosine moiety, indicating that isoquinoline formation occurs prior to peptide bond formation. The imidazolidin-4-one ring of imizoquins could form following additional oxidation of the methyl-derived bridgehead carbon by imqH. Lastly, O-methylation by imqG and leucine hydroxylation by imqE complete biosynthesis of the imizoquins. This chain is N-methyltransferase imqF, found in Aspergillus flavus (strain ATCC 200026 / FGSC A1120 / IAM 13836 / NRRL 3357 / JCM 12722 / SRRC 167).